A 348-amino-acid chain; its full sequence is Dihydroorotase (348 aa).

Residues histidine 17 and histidine 19 each contribute to the Zn(2+) site. Residues 19–21 (HLR) and asparagine 45 contribute to the substrate site. Residues lysine 103, histidine 140, and histidine 178 each coordinate Zn(2+). Lysine 103 carries the post-translational modification N6-carboxylysine. Histidine 140 serves as a coordination point for substrate. Leucine 223 is a substrate binding site. Aspartate 251 contributes to the Zn(2+) binding site. Aspartate 251 is an active-site residue. The substrate site is built by histidine 255 and alanine 267.

The protein belongs to the metallo-dependent hydrolases superfamily. DHOase family. Class II DHOase subfamily. As to quaternary structure, homodimer. It depends on Zn(2+) as a cofactor.

The enzyme catalyses (S)-dihydroorotate + H2O = N-carbamoyl-L-aspartate + H(+). Its pathway is pyrimidine metabolism; UMP biosynthesis via de novo pathway; (S)-dihydroorotate from bicarbonate: step 3/3. Functionally, catalyzes the reversible cyclization of carbamoyl aspartate to dihydroorotate. The protein is Dihydroorotase of Escherichia coli (strain UTI89 / UPEC).